A 325-amino-acid chain; its full sequence is Thiamine-monophosphate kinase (325 aa).

The Mg(2+) site is built by Asp-27 and Asp-44. His-51 contacts substrate. Mg(2+) is bound at residue Asp-73. Residues Tyr-103, 120–121 (GD), and Arg-147 each bind ATP. Position 121 (Asp-121) interacts with Mg(2+). Asp-215 serves as a coordination point for Mg(2+). Ser-217 serves as a coordination point for ATP. Mg(2+) is bound at residue Asp-218. 2 residues coordinate substrate: Glu-264 and Tyr-321.

Belongs to the thiamine-monophosphate kinase family.

The enzyme catalyses thiamine phosphate + ATP = thiamine diphosphate + ADP. It functions in the pathway cofactor biosynthesis; thiamine diphosphate biosynthesis; thiamine diphosphate from thiamine phosphate: step 1/1. Catalyzes the ATP-dependent phosphorylation of thiamine-monophosphate (TMP) to form thiamine-pyrophosphate (TPP), the active form of vitamin B1. In Bacillus subtilis (strain 168), this protein is Thiamine-monophosphate kinase.